The primary structure comprises 352 residues: Protein NDRG4 (352 aa).

3 positions are modified to phosphoserine: Ser-298, Ser-317, and Ser-323. A disordered region spans residues 301–352 (AVPSASMTRLARSRTASLTSASSVDGSRPQPCTHSDSSEGMGQVNHTMEVSC). The segment covering 308-323 (TRLARSRTASLTSASS) has biased composition (low complexity). The span at 330–352 (QPCTHSDSSEGMGQVNHTMEVSC) shows a compositional bias: polar residues.

It belongs to the NDRG family. As to expression, expressed in the brain and heart, weakly in the kidney; most prominently in postnatal brain where it is expressed widely in the olfactory bulb, cerebral cortex, hippocampus, cerebellum, thalamus, and medulla oblongata.

The protein resides in the cytoplasm. It is found in the cytosol. In terms of biological role, contributes to the maintenance of intracerebral BDNF levels within the normal range, which is necessary for the preservation of spatial learning and the resistance to neuronal cell death caused by ischemic stress. May enhance growth factor-induced ERK1 and ERK2 phosphorylation, including that induced by NGF. May attenuate NGF-promoted ELK1 phosphorylation in a microtubule-dependent manner. The sequence is that of Protein NDRG4 (Ndrg4) from Rattus norvegicus (Rat).